We begin with the raw amino-acid sequence, 251 residues long: Protein FAM216A (251 aa).

Polar residues predominate over residues Met-1 to Ser-16. The interval Met-1–His-49 is disordered.

It belongs to the FAM216 family.

This is Protein FAM216A (FAM216A) from Bos taurus (Bovine).